Reading from the N-terminus, the 198-residue chain is MISQDKNYSDDQISQDSEIDTIEAVSETEAVSETNEIIDMRDDRIQKLEVELVQAQQRERDLLLRSKAEIENMRRRNEIEVEKVYKFSLERFVSELLPVIDNLERALEMSDKSSQNLASTIEGIELTLKSLLNVVQKFGIKVVSETHVPFNPDIHQAMTILESEEHEPNHVIIVMQKGYLLNGRLIRPAMVTVSKTKS.

It belongs to the GrpE family. In terms of assembly, homodimer.

It is found in the cytoplasm. Its function is as follows. Participates actively in the response to hyperosmotic and heat shock by preventing the aggregation of stress-denatured proteins, in association with DnaK and GrpE. It is the nucleotide exchange factor for DnaK and may function as a thermosensor. Unfolded proteins bind initially to DnaJ; upon interaction with the DnaJ-bound protein, DnaK hydrolyzes its bound ATP, resulting in the formation of a stable complex. GrpE releases ADP from DnaK; ATP binding to DnaK triggers the release of the substrate protein, thus completing the reaction cycle. Several rounds of ATP-dependent interactions between DnaJ, DnaK and GrpE are required for fully efficient folding. In Baumannia cicadellinicola subsp. Homalodisca coagulata, this protein is Protein GrpE.